A 536-amino-acid chain; its full sequence is Velvet complex subunit B (536 aa).

The span at 1–26 (MIQRTTDPAAGSSTSGPPTNSLSWGS) shows a compositional bias: polar residues. 4 disordered regions span residues 1-27 (MIQR…WGSR), 106-143 (PNAA…AIPF), 157-409 (SAPA…RTLV), and 508-536 (KLPL…EESD). Positions 25-512 (GSRHNGKLYT…NQQNMKLPLR (488 aa)) constitute a Velvet domain. Over residues 114–143 (PPMPAKPRRPTNPPPPSNTHGSPPAPAIPF) the composition is skewed to pro residues. 2 stretches are compositionally biased toward low complexity: residues 158 to 170 (APAS…SASA) and 190 to 265 (PYGP…YPPY). Positions 280–305 (TSNFDHSQPVTSSVDQETNSPVVTTT) are enriched in polar residues. Positions 306–315 (ARDDDQREGE) are enriched in basic and acidic residues. Residues 328–342 (PSNSGAPSTSPTAST) are compositionally biased toward low complexity. Over residues 356-399 (EEREGPDGGPDLREPIEPGSTKAREEEDARTGTEKGDPKDKSDA) the composition is skewed to basic and acidic residues. Over residues 400–409 (QRATYTRTLV) the composition is skewed to polar residues. Residues 511–525 (LRNRHGSGSKRRRRG) show a composition bias toward basic residues.

Belongs to the velvet family. VelB subfamily. In terms of assembly, component of the heterotrimeric velvet complex composed of laeA, veA and velB; VeA acting as a bridging protein between laeA and velB. Forms a heterodimeric complex with vosA; the formation of the velB-vosA complex is light-dependent.

It is found in the nucleus. The protein localises to the cytoplasm. Functionally, component of the velvet transcription factor complex that controls sexual/asexual developmental ratio in response to light, promoting sexual development in the darkness while stimulating asexual sporulation under illumination. The velvet complex acts as a global regulator for secondary metabolite gene expression. Component of the velB-VosA heterodimeric complex that plays a dual role in activating genes associated with spore maturation and repressing certain development-associated genes. The velB-VosA complex binds DNA through the DNA-binding domain of vosA that recognizes an 11-nucleotide consensus sequence 5'-CTGGCCGCGGC-3' consisting of two motifs in the promoters of key developmental regulatory genes. The sequence is that of Velvet complex subunit B from Schizophyllum commune (strain H4-8 / FGSC 9210) (Split gill fungus).